An 88-amino-acid chain; its full sequence is uncharacterized protein (88 aa).

This is an uncharacterized protein from Banana bunchy top virus (isolate Autralia) (BBTV).